Here is a 250-residue protein sequence, read N- to C-terminus: Phosphoribosylaminoimidazole-succinocarboxamide synthase (250 aa).

It belongs to the SAICAR synthetase family.

The catalysed reaction is 5-amino-1-(5-phospho-D-ribosyl)imidazole-4-carboxylate + L-aspartate + ATP = (2S)-2-[5-amino-1-(5-phospho-beta-D-ribosyl)imidazole-4-carboxamido]succinate + ADP + phosphate + 2 H(+). The protein operates within purine metabolism; IMP biosynthesis via de novo pathway; 5-amino-1-(5-phospho-D-ribosyl)imidazole-4-carboxamide from 5-amino-1-(5-phospho-D-ribosyl)imidazole-4-carboxylate: step 1/2. This is Phosphoribosylaminoimidazole-succinocarboxamide synthase from Bifidobacterium adolescentis (strain ATCC 15703 / DSM 20083 / NCTC 11814 / E194a).